Reading from the N-terminus, the 664-residue chain is Macrolide export ATP-binding/permease protein MacB (664 aa).

The 239-residue stretch at 8–246 (LEVHNLVREF…ELNKDPDAAP (239 aa)) folds into the ABC transporter domain. 44–51 (GQSGSGKS) contacts ATP. 4 helical membrane passes run 287–307 (FLTM…VALG), 543–563 (IAVI…LVSV), 587–607 (FLIE…LLSL), and 629–649 (SIVA…FLPA).

It belongs to the ABC transporter superfamily. Macrolide exporter (TC 3.A.1.122) family. Homodimer. Part of the tripartite efflux system MacAB-TolC, which is composed of an inner membrane transporter, MacB, a periplasmic membrane fusion protein, MacA, and an outer membrane component, TolC. The complex forms a large protein conduit and can translocate molecules across both the inner and outer membranes. Interacts with MacA.

Its subcellular location is the cell inner membrane. Part of the tripartite efflux system MacAB-TolC. MacB is a non-canonical ABC transporter that contains transmembrane domains (TMD), which form a pore in the inner membrane, and an ATP-binding domain (NBD), which is responsible for energy generation. Confers resistance against macrolides. This is Macrolide export ATP-binding/permease protein MacB from Acinetobacter baylyi (strain ATCC 33305 / BD413 / ADP1).